Reading from the N-terminus, the 409-residue chain is Tyrosine--tRNA ligase (409 aa).

A 'HIGH' region motif is present at residues 54-63 (PTAPDIHLGH). A 'KMSKS' region motif is present at residues 238 to 242 (KMSKS). An ATP-binding site is contributed by K241. The 61-residue stretch at 347 to 407 (QGILRILREA…GKRKFARVKL (61 aa)) folds into the S4 RNA-binding domain.

Belongs to the class-I aminoacyl-tRNA synthetase family. TyrS type 2 subfamily. Homodimer.

It localises to the cytoplasm. The enzyme catalyses tRNA(Tyr) + L-tyrosine + ATP = L-tyrosyl-tRNA(Tyr) + AMP + diphosphate + H(+). Catalyzes the attachment of tyrosine to tRNA(Tyr) in a two-step reaction: tyrosine is first activated by ATP to form Tyr-AMP and then transferred to the acceptor end of tRNA(Tyr). This is Tyrosine--tRNA ligase from Bordetella bronchiseptica (strain ATCC BAA-588 / NCTC 13252 / RB50) (Alcaligenes bronchisepticus).